The sequence spans 500 residues: Protein SLENDER RICE1-LIKE 2 (500 aa).

The 387-residue stretch at 68-454 folds into the GRAS domain; that stretch reads KELEKMALRS…QRLYSASAWR (387 aa). A leucine repeat I (LRI) region spans residues 75 to 135; sequence LRSVNLMVTC…DALAERLFPA (61 aa). Residues 154–219 are VHIID; the sequence is FRGFYEAGPY…GGPPFLRITG (66 aa). A VHIID motif is present at residues 185-189; that stretch reads VHVID. Residues 233-265 form a leucine repeat II (LRII) region; the sequence is DVGLRLAEFARSCSVPFAFRGIAADQLDGLRPW. The segment at 275–376 is PFYRE; that stretch reads VAINSVLQLH…EAYLQGEIAD (102 aa). The LXXLL motif signature appears at 283 to 287; it reads LHRLL. An SAW region spans residues 379-454; sequence SREGSSRVER…QRLYSASAWR (76 aa). The segment at 466 to 500 is disordered; the sequence is SGAADAMEESQNSNTNGGGGGSSGGGHGALNQIMQ. The segment covering 481–493 has biased composition (gly residues); sequence NGGGGGSSGGGHG.

The protein belongs to the GRAS family. Expressed at low levels in leaf blades, leaf sheaths, rachis and flowers. Expressed in the embryo of immature seeds.

Its subcellular location is the nucleus. Probable transcriptional regulator that acts as a repressor of the gibberellin (GA) signaling pathway. Its repressive activity is weaker than that of SLR1. Its overexpression prevents the GA signaling pathway and induces a dwarf phenotype in Arabidopsis thaliana plants. The chain is Protein SLENDER RICE1-LIKE 2 from Oryza sativa subsp. japonica (Rice).